Consider the following 340-residue polypeptide: C5a anaphylatoxin chemotactic receptor 1 (340 aa).

The Extracellular segment spans residues 1-30; it reads TPDYGHYDDKDTLDANTPVDKTSNTLRVPD. Residues 3-11 form a required for CHIPS binding region; sequence DYGHYDDKD. Sulfotyrosine occurs at positions 4 and 7. An involved in C5a binding region spans residues 14–23; the sequence is DANTPVDKTS. The helical transmembrane segment at 31-57 threads the bilayer; that stretch reads ILALVIFAVVFLVGVLRNALVVWVTAF. The Cytoplasmic segment spans residues 58–62; the sequence is EAKRT. Residues 63–86 traverse the membrane as a helical segment; that stretch reads INAIWFLNLAVADFLSCLALPILF. Residues 87–103 are Extracellular-facing; it reads TSIVQHHHWPFGGAACR. An intrachain disulfide couples C102 to C181. The helical transmembrane segment at 104 to 125 threads the bilayer; it reads ILPSLILLNMYASILLLATISA. Residues 126–146 are Cytoplasmic-facing; that stretch reads DRFLLVFNPIWCQNFRGAGLA. Residues 147 to 167 traverse the membrane as a helical segment; the sequence is WIACAVAWGLALLLTIPSFLY. At 168–193 the chain is on the extracellular side; sequence RVVREEYFPPKVLCGVDHGHDKRRER. A helical membrane pass occupies residues 194-219; that stretch reads AVAIARLVLGFVWPLLTLTMCYTFLL. The Cytoplasmic portion of the chain corresponds to 220-235; that stretch reads LRTWSRRATRSTKTLK. The chain crosses the membrane as a helical span at residues 236-258; that stretch reads VVVAVVASFFIFWLPYQVTGMMM. Residues 259 to 275 lie on the Extracellular side of the membrane; the sequence is SFLEPSSPTFLLLKKLD. The chain crosses the membrane as a helical span at residues 276–296; that stretch reads SLCISFAYINCCINPIIYVVA. Over 297 to 340 the chain is Cytoplasmic; sequence GQGFQGRLRKSLPSLLRNVLTEESMVRESKSFTRSTVDTMAQKT. Residues S307, S310, S320, S325, S327, and S331 each carry the phosphoserine modification.

The protein belongs to the G-protein coupled receptor 1 family. In terms of assembly, homodimer. May also form higher-order oligomers. Interacts (when phosphorylated) with ARRB1 and ARRB2; the interaction is associated with internalization of C5aR. Interacts (via N-terminal domain) with S.aureus chemotaxis inhibitory protein (CHIPS); the interaction blocks the receptor and may thus inhibit the immune response. In terms of processing, sulfation plays a critical role in the association of C5aR with C5a, but no significant role in the ability of the receptor to transduce a signal and mobilize calcium in response to a small peptide agonist. Sulfation at Tyr-7 is important for CHIPS binding. Phosphorylated on serine residues in response to C5a binding, resulting in internalization of the receptor and short-term desensitization to C5a.

It is found in the cell membrane. The protein resides in the cytoplasmic vesicle. Its function is as follows. Receptor for the chemotactic and inflammatory peptide anaphylatoxin C5a. The ligand interacts with at least two sites on the receptor: a high-affinity site on the extracellular N-terminus, and a second site in the transmembrane region which activates downstream signaling events. Receptor activation stimulates chemotaxis, granule enzyme release, intracellular calcium release and superoxide anion production. The protein is C5a anaphylatoxin chemotactic receptor 1 (C5AR1) of Macaca mulatta (Rhesus macaque).